Consider the following 1522-residue polypeptide: Rho guanine nucleotide exchange factor 11 (1522 aa).

The segment at 1 to 40 (MSVRLPQSIDRLSSLSSLGDSAPERKSPSHHRQPSDASET) is disordered. Phosphoserine occurs at positions 2, 14, 16, and 35. The PDZ domain maps to 47-126 (CVIIQKDQHG…LTLLGSSPSS (80 aa)). 2 disordered regions span residues 128 to 175 (GISG…PEVQ) and 200 to 231 (YGDT…ERFP). Over residues 149 to 161 (PSPPPPPPLPPPQ) the composition is skewed to pro residues. 2 positions are modified to phosphoserine: S245 and S251. A Phosphothreonine modification is found at T254. Residues S255 and S271 each carry the phosphoserine modification. A disordered region spans residues 263-286 (AQHHRRQGSDAAVPSTGDQGVDQS). Residues 306-486 (ESDIIFQDLE…NTYMSHAGIR (181 aa)) enclose the RGSL domain. Positions 444 to 470 (LRERQVAEKQLAALGDILSKYEEDRSA) form a coiled coil. The interval 490-555 (ARPSNTAEKA…SSQSTFHIPL (66 aa)) is disordered. Basic and acidic residues predominate over residues 521–533 (SKKEKDALEDKKR). S556, S635, and S663 each carry phosphoserine. The disordered stretch occupies residues 573–680 (ENNQQYDAPE…FTPKMGRRSI (108 aa)). Over residues 601-637 (DSSRSEIRLGRSESLKGREEMKRSRKAENVPRSRSDV) the composition is skewed to basic and acidic residues. Low complexity predominate over residues 651 to 664 (SASSSTSSLSTRSL). Residues T668 and T672 each carry the phosphothreonine modification. The 190-residue stretch at 734 to 923 (DRQEVINELF…REILKYVNEA (190 aa)) folds into the DH domain. A PH domain is found at 965-1079 (KMIHEGPLTW…WMELLEEAVR (115 aa)). A disordered region spans residues 1084–1141 (HPGAAPMPVHPPPPGPREPAQQGPTPSRVELDDSDVFHGEPEPEELPGGTGSQQRVQG). A compositionally biased stretch (pro residues) spans 1091 to 1100 (PVHPPPPGPR). A compositionally biased stretch (basic and acidic residues) spans 1112 to 1124 (VELDDSDVFHGEP). At S1155 the chain carries Phosphoserine. 3 disordered regions span residues 1223–1320 (ETQA…AGGY), 1332–1423 (KVVP…RDVG), and 1453–1522 (LGGE…SPGP). Positions 1236–1245 (PTPSVISVTS) are enriched in polar residues. A phosphoserine mark is found at S1295 and S1300. Over residues 1338 to 1353 (PESGQSEPGPPEVEGG) the composition is skewed to low complexity. A phosphoserine mark is found at S1457 and S1458. T1462 and T1475 each carry phosphothreonine. S1480 bears the Phosphoserine mark. Acidic residues predominate over residues 1503–1513 (DGSDAPLEDST).

As to quaternary structure, interacts with GNA12 and GNA13 through the RGS domain. Interacts with RHOA, PLXNB1 and PLXNB2. Interacts with SLC1A6. Interacts (via DH domain) with GCSAM (via C-terminus). Found in a complex with ARHGEF11 and ARHGEF12; binding to ARHGEF11 and ARHGEF12 enhances CDC42 GEF activity of PLEKHG4B, and PLEKHG4B, in turn, inhibits ARHGEF11- and ARHGEF12-mediated RHOA activation. Phosphorylated by MAP kinase p38 (MAPK11, MAPK12, MAPK13 and/or MAPK14). In terms of processing, ubiquitinated by the BCR(KLHL20) E3 ubiquitin ligase complex when previously phosphorylated by MAP kinase p38 (MAPK11, MAPK12, MAPK13 and/or MAPK14), leading to its degradation, thereby restricting RhoA activity and facilitating growth cone spreading and neurite outgrowth. In terms of tissue distribution, ubiquitously expressed.

It is found in the cytoplasm. It localises to the membrane. Functionally, may play a role in the regulation of RhoA GTPase by guanine nucleotide-binding alpha-12 (GNA12) and alpha-13 (GNA13). Acts as guanine nucleotide exchange factor (GEF) for RhoA GTPase and may act as GTPase-activating protein (GAP) for GNA12 and GNA13. Involved in neurotrophin-induced neurite outgrowth. This Homo sapiens (Human) protein is Rho guanine nucleotide exchange factor 11 (ARHGEF11).